Consider the following 250-residue polypeptide: Flavin-dependent thymidylate synthase (250 aa).

Positions 7-233 constitute a ThyX domain; it reads LRVQLIAKTD…PSIFGDFDIA (227 aa). FAD-binding positions include Ser-71, 95–97, and Gln-103; that span reads RHR. DUMP is bound by residues 92 to 95, 103 to 107, and Arg-172; these read ELIR and QLSQR. The short motif at 95–105 is the ThyX motif element; sequence RHRHFSYSQLS. Residues 188–190 and His-194 each bind FAD; that span reads NYR. Arg-199 serves as a coordination point for dUMP. Arg-199 acts as the Involved in ionization of N3 of dUMP, leading to its activation in catalysis.

Belongs to the thymidylate synthase ThyX family. In terms of assembly, homotetramer. FAD serves as cofactor.

It carries out the reaction dUMP + (6R)-5,10-methylene-5,6,7,8-tetrahydrofolate + NADPH + H(+) = dTMP + (6S)-5,6,7,8-tetrahydrofolate + NADP(+). It participates in pyrimidine metabolism; dTTP biosynthesis. Functionally, catalyzes the reductive methylation of 2'-deoxyuridine-5'-monophosphate (dUMP) to 2'-deoxythymidine-5'-monophosphate (dTMP) while utilizing 5,10-methylenetetrahydrofolate (mTHF) as the methyl donor, and NADPH and FADH(2) as the reductant. This Mycobacteroides abscessus (strain ATCC 19977 / DSM 44196 / CCUG 20993 / CIP 104536 / JCM 13569 / NCTC 13031 / TMC 1543 / L948) (Mycobacterium abscessus) protein is Flavin-dependent thymidylate synthase.